The chain runs to 459 residues: Chromosomal replication initiator protein DnaA (459 aa).

Residues 1–74 form a domain I, interacts with DnaA modulators region; it reads MQKIETFWHF…DEMAQDHFNE (74 aa). Residues 74–122 form a domain II region; it reads ERISFRLELREPAESEAQTVRTSAQKNREDKKPAAEKTQGVTSRKTNPS. The segment at 87–122 is disordered; that stretch reads ESEAQTVRTSAQKNREDKKPAAEKTQGVTSRKTNPS. Polar residues predominate over residues 89-98; sequence EAQTVRTSAQ. Over residues 99–108 the composition is skewed to basic and acidic residues; it reads KNREDKKPAA. The span at 112 to 122 shows a compositional bias: polar residues; sequence QGVTSRKTNPS. Residues 123-339 form a domain III, AAA+ region region; it reads QLNASFTFDA…GALKRVLAFS (217 aa). Gly-167, Gly-169, Lys-170, and Thr-171 together coordinate ATP. Residues 340 to 459 are domain IV, binds dsDNA; it reads RFTGHSISLD…FNALMHILRG (120 aa).

This sequence belongs to the DnaA family. As to quaternary structure, oligomerizes as a right-handed, spiral filament on DNA at oriC.

Its subcellular location is the cytoplasm. Functionally, plays an essential role in the initiation and regulation of chromosomal replication. ATP-DnaA binds to the origin of replication (oriC) to initiate formation of the DNA replication initiation complex once per cell cycle. Binds the DnaA box (a 9 base pair repeat at the origin) and separates the double-stranded (ds)DNA. Forms a right-handed helical filament on oriC DNA; dsDNA binds to the exterior of the filament while single-stranded (ss)DNA is stabiized in the filament's interior. The ATP-DnaA-oriC complex binds and stabilizes one strand of the AT-rich DNA unwinding element (DUE), permitting loading of DNA polymerase. After initiation quickly degrades to an ADP-DnaA complex that is not apt for DNA replication. Binds acidic phospholipids. This is Chromosomal replication initiator protein DnaA from Nitrosomonas europaea (strain ATCC 19718 / CIP 103999 / KCTC 2705 / NBRC 14298).